We begin with the raw amino-acid sequence, 375 residues long: Acyl-coenzyme A diphosphatase NUDT19 (375 aa).

A Nudix hydrolase domain is found at 15-263 (AASIVLAAGW…IWLPPPQFYE (249 aa)). Residues 91-116 (LGPAPFSRTAFPSLPDTDDHKTDNTG) form a disordered region. The short motif at 116–137 (GTLPEDVAFRICAVREAFEEAG) is the Nudix box element. Residues Glu-131 and Glu-135 each contribute to the Mg(2+) site. The Microbody targeting signal motif lies at 373–375 (SHL).

This sequence belongs to the Nudix hydrolase family. As to quaternary structure, monomer. The cofactor is Mg(2+). Mn(2+) serves as cofactor.

The protein resides in the peroxisome. The catalysed reaction is an acyl-CoA + H2O = an acyl-4'-phosphopantetheine + adenosine 3',5'-bisphosphate + 2 H(+). The enzyme catalyses CoA + H2O = (R)-4'-phosphopantetheine + adenosine 3',5'-bisphosphate + 2 H(+). It carries out the reaction hexanoyl-CoA + H2O = hexanoyl-4'-phosphopantetheine + adenosine 3',5'-bisphosphate + 2 H(+). It catalyses the reaction octanoyl-CoA + H2O = S-octanoyl-4'-phosphopantetheine + adenosine 3',5'-bisphosphate + 2 H(+). The catalysed reaction is butanoyl-CoA + H2O = S-butanoyl-4'-phosphopantetheine + adenosine 3',5'-bisphosphate + 2 H(+). The enzyme catalyses propanoyl-CoA + H2O = propanoyl-4'-phosphopantetheine + adenosine 3',5'-bisphosphate + 2 H(+). It carries out the reaction malonyl-CoA + H2O = malonyl-4'-phosphopantetheine + adenosine 3',5'-bisphosphate + 2 H(+). It catalyses the reaction succinyl-CoA + H2O = succinyl-4'-phosphopantetheine + adenosine 3',5'-bisphosphate + 2 H(+). The catalysed reaction is choloyl-CoA + H2O = S-choloyl-4'-phosphopantetheine + adenosine 3',5'-bisphosphate + 2 H(+). The enzyme catalyses 4,8-dimethylnonanoyl-CoA + H2O = S-(4,8-dimethylnonanoyl)-4'-phosphopantetheine + adenosine 3',5'-bisphosphate + 2 H(+). It carries out the reaction (9Z,12Z,15Z)-octadecatrienoyl-CoA + H2O = S-(9Z,12Z,15Z-octadecatrienoyl)-4'-phosphopantetheine + adenosine 3',5'-bisphosphate + 2 H(+). It catalyses the reaction (9Z,12Z)-octadecadienoyl-CoA + H2O = S-(9Z,12Z-octadecadienoyl)-4'-phosphopantetheine + adenosine 3',5'-bisphosphate + 2 H(+). The catalysed reaction is (9Z)-hexadecenoyl-CoA + H2O = S-(9Z-hexadecenoyl)-4'-phosphopantetheine + adenosine 3',5'-bisphosphate + 2 H(+). The enzyme catalyses (9Z)-tetradecenoyl-CoA + H2O = S-(9Z-tetradecenoyl)-4'-phosphopantetheine + adenosine 3',5'-bisphosphate + 2 H(+). It carries out the reaction (6Z)-octenoyl-CoA + H2O = S-(6Z-octenoyl)-4'-phosphopantetheine + adenosine 3',5'-bisphosphate + 2 H(+). It catalyses the reaction hexadecanoyl-CoA + H2O = S-hexadecanoyl-4'-phosphopantetheine + adenosine 3',5'-bisphosphate + 2 H(+). The catalysed reaction is tetradecanoyl-CoA + H2O = tetradecanoyl-4'-phosphopantetheine + adenosine 3',5'-bisphosphate + 2 H(+). The enzyme catalyses dodecanoyl-CoA + H2O = S-dodecanoyl-4'-phosphopantetheine + adenosine 3',5'-bisphosphate + 2 H(+). It carries out the reaction a 5'-end CoA-ribonucleoside in mRNA + H2O = a 5'-end phospho-adenosine-phospho-ribonucleoside in mRNA + (R)-4'-phosphopantetheine + 2 H(+). Functionally, fatty acyl-coenzyme A (CoA) diphosphatase that hydrolyzes fatty acyl-CoA to yield acyl-4'-phosphopantetheine and adenosine 3',5'-bisphosphate. Mediates the hydrolysis of a wide range of CoA esters, including choloyl-CoA and branched-chain fatty-acyl-CoA esters and at low substrate concentrations medium and long-chain fatty-acyl-CoA esters are the primary substrates. Highest activity seen with medium-chain acyl-CoA esters and higher rates of activity seen with the unsaturated acyl-CoA esters compared with the saturated esters. Exhibits decapping activity towards dpCoA-capped RNAs in vitro. The protein is Acyl-coenzyme A diphosphatase NUDT19 (NUDT19) of Homo sapiens (Human).